The sequence spans 62 residues: Photosystem II reaction center protein Z (62 aa).

The next 2 membrane-spanning stretches (helical) occupy residues 8-28 (SVFA…VALA) and 41-61 (FSGV…NSFI).

It belongs to the PsbZ family. PSII is composed of 1 copy each of membrane proteins PsbA, PsbB, PsbC, PsbD, PsbE, PsbF, PsbH, PsbI, PsbJ, PsbK, PsbL, PsbM, PsbT, PsbY, PsbZ, Psb30/Ycf12, at least 3 peripheral proteins of the oxygen-evolving complex and a large number of cofactors. It forms dimeric complexes.

It localises to the plastid. It is found in the chloroplast thylakoid membrane. In terms of biological role, may control the interaction of photosystem II (PSII) cores with the light-harvesting antenna, regulates electron flow through the 2 photosystem reaction centers. PSII is a light-driven water plastoquinone oxidoreductase, using light energy to abstract electrons from H(2)O, generating a proton gradient subsequently used for ATP formation. This chain is Photosystem II reaction center protein Z, found in Cryptomeria japonica (Japanese cedar).